The primary structure comprises 1088 residues: MAAAAGDVEAFLAACQASGDAAYGAAKAVLERLEAPATRAEARRLLGAVRRRFAAGGPAAGLECFRTFHFRIHDVVLDPHLQGFQQRKKLTMMEIPSIFIPEDWSFTFYEGLNRHPDSIFRDKTVAELGCGNGWISIALAEKWCPSKVYGLDINPRPIKIAWINLYLNALDDDGLPIYDAEGKTLLDRVEFYESDLLSYCRDNKIELDRIVGCIPQILNPNPEAMSKIVTENSSEEFLYSLSNYCALQGFVEDQFGLGLIARAVEEGISVIKPSGLMVFNMGGRPGQGVCERLFLRRGFRINKLWQTKIMQAADTDISALVEIEKNSRHRFEFFMDLVGDQPVCARTAWAYMKSGGRISHALSVYSCQLRQPNQVKKIFEFLKDGFHEVSSSLDLSFDDDSVADEKIPFLAYLASFLQENKSNPCEPPAGCLNFRNLVAGFMKSYHHIPLTPDNVVVFPSRAVAIENALRLFSPGLAIVDEHLTRHLPKQWLTSLAIEESNHAKDTVTVIEAPRQSDLLIELIRKLKPQVVVTGMAQFEAITSAAFVNLLSVTKDVGSRLLLDISEHLELSSLPSSNGVLKYLAGKTLPSHAAILCGLVKNQVYSDLEVAFAISEDPTVYKALSQTIELLEGHTSVISQHYYGCLFHELLAFQIGDRHPQQEREPAEVISKEMIGFSSSAMSTLEGAEFFVPGSMESGVIHMDLDRSFLPVPSAVNASIFESFVRQNITDSETDVRSSIQQLVKDSYGFSAGGASEIIYGNTCLALFNKLVLCCMQEQGTLLFPLGTNGHYVNAAKFVNATTLTIPTKADSGFKIEPSALADTLEKVSQPWVYISGPTINPTGFLYSDDDIAELLSVCATYGARVVIDTSSSGLEFQATGCSQWNLERCLSNVKSSKPSFSVVLLGELSFELTTAGLDFGFLIMSDSSLVDTFYSFPSLSRPHSTLKYTFRKLLGLKNQKDQHFSDLILEQKETLKNRADQLIKMLESCGWDAVGCHGGISMLAKPTAYIGKSLKVDGFEGKLDSHNMREALLRSTGLCISSSGWTGVPDYCRFSFALESGDFDRAMECIARFRELVLGGGAKVNGSN.

The protein belongs to the class I-like SAM-binding methyltransferase superfamily. As to quaternary structure, homotetramer. In terms of tissue distribution, expressed in the shoot, scutellum, and aleurone cells but not in the root or endosperm.

It is found in the cytoplasm. The enzyme catalyses L-methionine + S-adenosyl-L-methionine = S-methyl-L-methionine + S-adenosyl-L-homocysteine. In terms of biological role, catalyzes the S-methylmethionine (SMM) biosynthesis from adenosyl-L-homocysteine (AdoMet) and methionine. SMM biosynthesis (by MMT1) and degradation (by HMT-1, HMT-2 and HMT-3) constitute the SMM cycle in plants, which is probably required to achieve short term control of AdoMet level. Also able to catalyze the selenium-methylmethionine (SeMM) from AdoMet and selenium-methionine (SeMet). May play a role in phoem sulfur transport; such function is however not essential. The sequence is that of Methionine S-methyltransferase (MMT1) from Hordeum vulgare (Barley).